An 884-amino-acid polypeptide reads, in one-letter code: Probable DNA-directed RNA polymerase subunit beta (884 aa).

It belongs to the RNA polymerase beta chain family.

It catalyses the reaction RNA(n) + a ribonucleoside 5'-triphosphate = RNA(n+1) + diphosphate. Functionally, required for late and very late gene expression. May be a component of the novel RNA polymerase activity induced by baculovirus infection. This is Probable DNA-directed RNA polymerase subunit beta (LEF-8) from Orgyia pseudotsugata multicapsid polyhedrosis virus (OpMNPV).